Consider the following 510-residue polypeptide: Histidine ammonia-lyase (510 aa).

The 5-imidazolinone (Ala-Gly) cross-link spans 143–145; it reads ASG. S144 carries the post-translational modification 2,3-didehydroalanine (Ser).

The protein belongs to the PAL/histidase family. In terms of processing, contains an active site 4-methylidene-imidazol-5-one (MIO), which is formed autocatalytically by cyclization and dehydration of residues Ala-Ser-Gly.

It is found in the cytoplasm. It catalyses the reaction L-histidine = trans-urocanate + NH4(+). The protein operates within amino-acid degradation; L-histidine degradation into L-glutamate; N-formimidoyl-L-glutamate from L-histidine: step 1/3. The chain is Histidine ammonia-lyase from Shewanella sediminis (strain HAW-EB3).